The following is a 275-amino-acid chain: Large ribosomal subunit protein uL2 (275 aa).

A disordered region spans residues 224-275 (AMNPVDHPHGGGEAKAGQGNPHPVTPWGVPTKGYKTRKNKRTQQFIVRDRRG).

Belongs to the universal ribosomal protein uL2 family. Part of the 50S ribosomal subunit. Forms a bridge to the 30S subunit in the 70S ribosome.

Functionally, one of the primary rRNA binding proteins. Required for association of the 30S and 50S subunits to form the 70S ribosome, for tRNA binding and peptide bond formation. It has been suggested to have peptidyltransferase activity; this is somewhat controversial. Makes several contacts with the 16S rRNA in the 70S ribosome. This is Large ribosomal subunit protein uL2 from Xanthomonas oryzae pv. oryzae (strain MAFF 311018).